We begin with the raw amino-acid sequence, 60 residues long: Cytotoxin 5 (60 aa).

4 cysteine pairs are disulfide-bonded: C3–C21, C14–C38, C42–C53, and C54–C59.

Belongs to the three-finger toxin family. Short-chain subfamily. Type IA cytotoxin sub-subfamily. As to quaternary structure, monomer in solution; Homodimer and oligomer in the presence of negatively charged lipids forming a pore with a size ranging between 20 and 30 Angstroms. In terms of tissue distribution, expressed by the venom gland.

It localises to the secreted. The protein resides in the target cell membrane. Its function is as follows. Shows cytolytic activity on many different cells by forming pore in lipid membranes. In vivo, increases heart rate or kills the animal by cardiac arrest. In addition, it binds to heparin with high affinity, interacts with Kv channel-interacting protein 1 (KCNIP1) in a calcium-independent manner, and binds to integrin alpha-V/beta-3 (ITGAV/ITGB3) with moderate affinity. The sequence is that of Cytotoxin 5 from Naja mossambica (Mozambique spitting cobra).